Reading from the N-terminus, the 89-residue chain is Barrier-to-autointegration factor (89 aa).

Methionine 1 carries the post-translational modification N-acetylmethionine. Residue threonine 2 is modified to N-acetylthreonine; in Barrier-to-autointegration factor, N-terminally processed. Threonine 2 and threonine 3 each carry phosphothreonine; by VRK1 and VRK2. Position 4 is a phosphoserine; by VRK1 and VRK2 (serine 4). The HhH domain occupies 20–35 (VGSLAGIGEVLGKKLE).

Belongs to the BAF family. Homodimer. Heterodimerizes with BANF2. Interacts with ANKLE2/LEM4, leading to decreased phosphorylation by VRK1 and promoting dephosphorylation by protein phosphatase 2A (PP2A). Binds non-specifically to double-stranded DNA, and is found as a hexamer or dodecamer upon DNA binding. Binds to LEM domain-containing nuclear proteins such as LEMD3/MAN1, TMPO/LAP2 and EMD (emerin). Interacts with ANKLE1 (via LEM domain); the interaction may favor BANF1 dimerization. Interacts with CRX and LMNA (lamin-A). Binds linker histone H1.1 and core histones H3. Interacts with LEMD2 (via LEM domain). Interacts with PARP1; interaction takes place in response to oxidative DNA damage. In terms of processing, ser-4 is the major site of phosphorylation as compared to Thr-2 and Thr-3. Phosphorylation on Thr-2; Thr-3 and Ser-4 disrupts its ability to bind DNA and reduces its ability to bind LEM domain-containing proteins. Non phosphorylated BAF seems to enhance binding between EMD and LMNA. Dephosphorylated by protein phosphatase 2A (PP2A) following interaction with ANKLE2/LEM4 during mitotic exit, leading to mitotic nuclear envelope reassembly.

The protein resides in the nucleus. The protein localises to the chromosome. It localises to the nucleus envelope. It is found in the cytoplasm. Its function is as follows. Non-specific DNA-binding protein that plays key roles in mitotic nuclear reassembly, chromatin organization, DNA damage response, gene expression and intrinsic immunity against foreign DNA. Contains two non-specific double-stranded DNA (dsDNA)-binding sites which promote DNA cross-bridging. Plays a key role in nuclear membrane reformation at the end of mitosis by driving formation of a single nucleus in a spindle-independent manner. Transiently cross-bridges anaphase chromosomes via its ability to bridge distant DNA sites, leading to the formation of a dense chromatin network at the chromosome ensemble surface that limits membranes to the surface. Also acts as a negative regulator of innate immune activation by restricting CGAS activity toward self-DNA upon acute loss of nuclear membrane integrity. Outcompetes CGAS for DNA-binding, thereby preventing CGAS activation and subsequent damaging autoinflammatory responses. Also involved in DNA damage response: interacts with PARP1 in response to oxidative stress, thereby inhibiting the ADP-ribosyltransferase activity of PARP1. Involved in the recognition of exogenous dsDNA in the cytosol: associates with exogenous dsDNA immediately after its appearance in the cytosol at endosome breakdown and is required to avoid autophagy. In case of poxvirus infection, has an antiviral activity by blocking viral DNA replication. This Bos taurus (Bovine) protein is Barrier-to-autointegration factor (BANF1).